A 368-amino-acid polypeptide reads, in one-letter code: Xaa-Pro dipeptidase (368 aa).

Positions 223, 234, 298, 327, and 341 each coordinate Mn(2+).

Belongs to the peptidase M24B family. Mn(2+) serves as cofactor.

The protein localises to the cytoplasm. It carries out the reaction Xaa-L-Pro dipeptide + H2O = an L-alpha-amino acid + L-proline. This chain is Xaa-Pro dipeptidase (pepQ), found in Lactobacillus helveticus (Lactobacillus suntoryeus).